The following is a 215-amino-acid chain: Wtf element wtf7 (215 aa).

Residues Met1–Asn21 are disordered. 3 helical membrane-spanning segments follow: residues Leu119–Phe139, Leu149–Leu169, and Leu189–Tyr209.

The protein belongs to the WTF family.

It localises to the spore membrane. May act in meiotic drive. In Schizosaccharomyces pombe (strain 972 / ATCC 24843) (Fission yeast), this protein is Wtf element wtf7.